The primary structure comprises 526 residues: Protein spinster homolog 1 (526 aa).

The segment at 1–44 (MTSRRSHGDVTPFLTQADNTEEEGVRDPESQSSDEEEEEGKDHG) is disordered. Transmembrane regions (helical) follow at residues 59-79 (VIIVIILFYINLLNYMDRFTV), 98-118 (GLVQTVFICSYMFLAPVFGYL), 126-146 (LIMCVGISFWSLVTLLSSFVS), 159-179 (LVGVGEASYSTIAPTIIADLF), 187-207 (MLSFFYFATPVGCGLGYIVGS), 218-238 (WALRVTPGLGLLAVLLLIFVA), 272-292 (FILSTFGFTTVAFVTGALALW), 321-341 (MIFGGITCITGILGVLTGVEI), 355-375 (LVCAVGMISSAPFLFLSLAFA), 384-404 (VFIFIGETLLSLNWALVADIL), 419-439 (LQIVVSHLLGDAGSPYLIGVI), and 463-483 (MICAFVGVIGGGFFLTTALFI).

The protein belongs to the major facilitator superfamily. Spinster (TC 2.A.1.49) family.

It is found in the lysosome membrane. The catalysed reaction is a 1-acyl-sn-glycero-3-phosphocholine(out) + H(+)(out) = a 1-acyl-sn-glycero-3-phosphocholine(in) + H(+)(in). The enzyme catalyses a 1-acyl-sn-glycero-3-phosphoethanolamine(out) + H(+)(out) = a 1-acyl-sn-glycero-3-phosphoethanolamine(in) + H(+)(in). It carries out the reaction a 1-O-(1Z-alkenyl)-sn-glycero-3-phosphocholine(out) + H(+)(out) = a 1-O-(1Z-alkenyl)-sn-glycero-3-phosphocholine(in) + H(+)(in). It catalyses the reaction a 1-O-(1Z-alkenyl)-sn-glycero-3-phosphoethanolamine(out) + H(+)(out) = a 1-O-(1Z-alkenyl)-sn-glycero-3-phosphoethanolamine(in) + H(+)(in). In terms of biological role, mediates the rate-limiting, proton-dependent, lysosomal efflux of lysophospholipids. Selective for zwitterionic headgroups such as lysophosphatidylcholine (LPC) and lysophosphatidylethanolamine (LPE). Essential player in lysosomal homeostasis. The polypeptide is Protein spinster homolog 1 (spns1) (Xenopus laevis (African clawed frog)).